The sequence spans 127 residues: Class I hydrophobin 1 (127 aa).

The first 20 residues, 1 to 20 (MLSLLSKAVSLAILVTAVVA), serve as a signal peptide directing secretion. 4 disulfide bridges follow: Cys53–Cys108, Cys60–Cys102, Cys61–Cys94, and Cys109–Cys122. Asn66 carries an N-linked (GlcNAc...) asparagine glycan.

The protein belongs to the fungal hydrophobin family. As to quaternary structure, self-assembles to form functional amyloid fibrils called rodlets. Self-assembly into fibrillar rodlets occurs spontaneously at hydrophobic:hydrophilic interfaces and the rodlets further associate laterally to form amphipathic monolayers. Expressed everywhere in the mycelial tissues of developing fruiting bodies except for the top parts of the pileus (cap) and for the prehymenophore; but high level of the transcript is detected in the parts surrounding the prehymenophore.

It localises to the secreted. It is found in the cell wall. In terms of biological role, aerial growth, conidiation, and dispersal of filamentous fungi in the environment rely upon a capability of their secreting small amphipathic proteins called hydrophobins (HPBs) with low sequence identity. Class I can self-assemble into an outermost layer of rodlet bundles on aerial cell surfaces, conferring cellular hydrophobicity that supports fungal growth, development and dispersal; whereas Class II form highly ordered films at water-air interfaces through intermolecular interactions but contribute nothing to the rodlet structure. Hyd1 is a class I hydrophobin that plays a role in fruiting body initiation rather than in mature fruit body maintenance. Seems to be involved in the formation in the extracellular matrix of lined air channels with a hydrophobic membrane. These channels may help to provide gas exchange during respiration in mycelial tissues of developing fruiting bodies and are formed all over the mycelial tissues of these developing fruiting bodies except for the top parts of the pileus (cap) and for the prehymenophore. This is Class I hydrophobin 1 from Lentinula edodes (Shiitake mushroom).